The primary structure comprises 329 residues: MIVVTGAAGFIGSNLVRGLNRRGIQDIIAVDDLTDGDKFRNLVDCSIADYLDKDEFRERVRGGNLPALRAVLHQGACSDTTERNGRYMLDNNYRVTLELFEYCQAERVPFLYASSAAVYGGSSVYVEDPANEHPLNVYGYSKLLFDQVLRTRMDSLTAQVVGLRYFNVYGPHEQHKGRMASVAFHNMNQFLAEGHVRLFAGWDGYEDGGQSRDFISVEDVVAVNLHFLDNPDQSGVFNCGTGRAQPFNDVAAAVVNTLRAERGEAALPLAELVKKGLLRYIPFPDDLKGRYQSYTQADVSRLRATGFSAPMRDVQTGVSEYVRYWRALK.

NADP(+) is bound by residues 10 to 11 (FI), 31 to 32 (DD), K38, K53, 74 to 78 (QGACS), and N91. Y138 functions as the Proton acceptor in the catalytic mechanism. NADP(+) is bound at residue K142. Substrate is bound at residue N167. Positions 168 and 176 each coordinate NADP(+). K176 acts as the Proton acceptor in catalysis. Residues R178, H185, 199–202 (FAGW), R212, and Y291 each bind substrate.

Belongs to the NAD(P)-dependent epimerase/dehydratase family. HldD subfamily. In terms of assembly, homopentamer. The cofactor is NADP(+).

The catalysed reaction is ADP-D-glycero-beta-D-manno-heptose = ADP-L-glycero-beta-D-manno-heptose. The protein operates within nucleotide-sugar biosynthesis; ADP-L-glycero-beta-D-manno-heptose biosynthesis; ADP-L-glycero-beta-D-manno-heptose from D-glycero-beta-D-manno-heptose 7-phosphate: step 4/4. Its pathway is bacterial outer membrane biogenesis; LPS core biosynthesis. Catalyzes the interconversion between ADP-D-glycero-beta-D-manno-heptose and ADP-L-glycero-beta-D-manno-heptose via an epimerization at carbon 6 of the heptose. In Bordetella pertussis (strain Tohama I / ATCC BAA-589 / NCTC 13251), this protein is ADP-L-glycero-D-manno-heptose-6-epimerase.